The primary structure comprises 851 residues: Alanine--tRNA ligase (851 aa).

Zn(2+)-binding residues include histidine 554, histidine 558, cysteine 656, and histidine 660.

This sequence belongs to the class-II aminoacyl-tRNA synthetase family. Zn(2+) is required as a cofactor.

It localises to the cytoplasm. The catalysed reaction is tRNA(Ala) + L-alanine + ATP = L-alanyl-tRNA(Ala) + AMP + diphosphate. In terms of biological role, catalyzes the attachment of alanine to tRNA(Ala) in a two-step reaction: alanine is first activated by ATP to form Ala-AMP and then transferred to the acceptor end of tRNA(Ala). Also edits incorrectly charged Ser-tRNA(Ala) and Gly-tRNA(Ala) via its editing domain. This is Alanine--tRNA ligase from Aliarcobacter butzleri (strain RM4018) (Arcobacter butzleri).